The following is a 479-amino-acid chain: Ribulose bisphosphate carboxylase large chain (479 aa).

Residues 1-2 (MS) constitute a propeptide that is removed on maturation. Substrate contacts are provided by Asn123 and Thr173. Residue Lys175 is the Proton acceptor of the active site. Lys177 contributes to the substrate binding site. Mg(2+) is bound by residues Lys201, Asp203, and Glu204. Lys201 is modified (N6-carboxylysine). The residue at position 208 (Ser208) is a Phosphoserine. His294 (proton acceptor) is an active-site residue. Residues Arg295 and His327 each contribute to the substrate site. Phosphothreonine is present on Thr330. Ser379 contributes to the substrate binding site.

It belongs to the RuBisCO large chain family. Type I subfamily. Heterohexadecamer of 8 large chains and 8 small chains; disulfide-linked. The disulfide link is formed within the large subunit homodimers. Mg(2+) is required as a cofactor. In terms of processing, the disulfide bond which can form in the large chain dimeric partners within the hexadecamer appears to be associated with oxidative stress and protein turnover.

The protein localises to the plastid. Its subcellular location is the chloroplast. It catalyses the reaction 2 (2R)-3-phosphoglycerate + 2 H(+) = D-ribulose 1,5-bisphosphate + CO2 + H2O. The catalysed reaction is D-ribulose 1,5-bisphosphate + O2 = 2-phosphoglycolate + (2R)-3-phosphoglycerate + 2 H(+). In terms of biological role, ruBisCO catalyzes two reactions: the carboxylation of D-ribulose 1,5-bisphosphate, the primary event in carbon dioxide fixation, as well as the oxidative fragmentation of the pentose substrate in the photorespiration process. Both reactions occur simultaneously and in competition at the same active site. This is Ribulose bisphosphate carboxylase large chain from Arabis hirsuta (Hairy rock-cress).